Consider the following 91-residue polypeptide: YcgL domain-containing protein ESA_01460 (91 aa).

The YcgL domain maps to 1-85; it reads MFCVIYRSAR…PPENLLKQHL (85 aa).

The sequence is that of YcgL domain-containing protein ESA_01460 from Cronobacter sakazakii (strain ATCC BAA-894) (Enterobacter sakazakii).